The following is a 198-amino-acid chain: Prostamide/prostaglandin F synthase (198 aa).

Tyr108 is subject to Phosphotyrosine.

Belongs to the peroxiredoxin-like PRXL2 family. Prostamide/prostaglandin F synthase subfamily.

Its subcellular location is the cytoplasm. The protein resides in the cytosol. The enzyme catalyses prostaglandin H2 + [thioredoxin]-dithiol = prostaglandin F2alpha + [thioredoxin]-disulfide. The catalysed reaction is prostamide F2alpha + [thioredoxin]-disulfide = prostamide H2 + [thioredoxin]-dithiol. Its function is as follows. Catalyzes the reduction of prostaglandin-ethanolamide H(2) (prostamide H(2)) to prostamide F(2alpha) with NADPH as proton donor. Also able to reduce prostaglandin H(2) to prostaglandin F(2alpha). The polypeptide is Prostamide/prostaglandin F synthase (Homo sapiens (Human)).